A 357-amino-acid chain; its full sequence is Dual-specificity RNA methyltransferase RlmN (357 aa).

Catalysis depends on Glu-89, which acts as the Proton acceptor. The 232-residue stretch at Glu-109–Asp-340 folds into the Radical SAM core domain. Cys-116 and Cys-345 are oxidised to a cystine. Cys-123, Cys-127, and Cys-130 together coordinate [4Fe-4S] cluster. S-adenosyl-L-methionine contacts are provided by residues Gly-173 to Glu-174, Ser-203, Ser-226 to His-228, and Asn-302. Cys-345 serves as the catalytic S-methylcysteine intermediate.

This sequence belongs to the radical SAM superfamily. RlmN family. [4Fe-4S] cluster is required as a cofactor.

The protein localises to the cytoplasm. The enzyme catalyses adenosine(2503) in 23S rRNA + 2 reduced [2Fe-2S]-[ferredoxin] + 2 S-adenosyl-L-methionine = 2-methyladenosine(2503) in 23S rRNA + 5'-deoxyadenosine + L-methionine + 2 oxidized [2Fe-2S]-[ferredoxin] + S-adenosyl-L-homocysteine. The catalysed reaction is adenosine(37) in tRNA + 2 reduced [2Fe-2S]-[ferredoxin] + 2 S-adenosyl-L-methionine = 2-methyladenosine(37) in tRNA + 5'-deoxyadenosine + L-methionine + 2 oxidized [2Fe-2S]-[ferredoxin] + S-adenosyl-L-homocysteine. Functionally, specifically methylates position 2 of adenine 2503 in 23S rRNA and position 2 of adenine 37 in tRNAs. m2A2503 modification seems to play a crucial role in the proofreading step occurring at the peptidyl transferase center and thus would serve to optimize ribosomal fidelity. This is Dual-specificity RNA methyltransferase RlmN from Helicobacter pylori (strain HPAG1).